An 81-amino-acid chain; its full sequence is Large ribosomal subunit protein bL31B (81 aa).

This sequence belongs to the bacterial ribosomal protein bL31 family. Type B subfamily. Part of the 50S ribosomal subunit.

The polypeptide is Large ribosomal subunit protein bL31B (rpmE2) (Lactiplantibacillus plantarum (strain ATCC BAA-793 / NCIMB 8826 / WCFS1) (Lactobacillus plantarum)).